We begin with the raw amino-acid sequence, 181 residues long: Inorganic pyrophosphatase (181 aa).

Substrate-binding residues include K16, R30, and Y42. Positions 52, 57, and 89 each coordinate Mg(2+). Substrate is bound at residue Y126.

The protein belongs to the PPase family. In terms of assembly, homohexamer. Mg(2+) is required as a cofactor.

The protein localises to the cytoplasm. The catalysed reaction is diphosphate + H2O = 2 phosphate + H(+). Catalyzes the hydrolysis of inorganic pyrophosphate (PPi) forming two phosphate ions. In Malacoplasma penetrans (strain HF-2) (Mycoplasma penetrans), this protein is Inorganic pyrophosphatase.